The sequence spans 351 residues: UDP-3-O-acylglucosamine N-acyltransferase (351 aa).

Residue His-240 is the Proton acceptor of the active site.

It belongs to the transferase hexapeptide repeat family. LpxD subfamily. In terms of assembly, homotrimer.

It carries out the reaction a UDP-3-O-[(3R)-3-hydroxyacyl]-alpha-D-glucosamine + a (3R)-hydroxyacyl-[ACP] = a UDP-2-N,3-O-bis[(3R)-3-hydroxyacyl]-alpha-D-glucosamine + holo-[ACP] + H(+). It participates in bacterial outer membrane biogenesis; LPS lipid A biosynthesis. In terms of biological role, catalyzes the N-acylation of UDP-3-O-acylglucosamine using 3-hydroxyacyl-ACP as the acyl donor. Is involved in the biosynthesis of lipid A, a phosphorylated glycolipid that anchors the lipopolysaccharide to the outer membrane of the cell. In Methylacidiphilum infernorum (isolate V4) (Methylokorus infernorum (strain V4)), this protein is UDP-3-O-acylglucosamine N-acyltransferase.